Here is a 596-residue protein sequence, read N- to C-terminus: Actin-related protein 9 (596 aa).

Residues 148–178 (LASPAETSPDKGDASASEAVPDVTDSKDTSE) are disordered.

The protein belongs to the actin family. ARP8 subfamily.

In Arabidopsis thaliana (Mouse-ear cress), this protein is Actin-related protein 9 (ARP9).